Consider the following 476-residue polypeptide: Glutamate mutase epsilon subunit (476 aa).

Arg62 is an L-glutamate binding site. Adenosylcob(III)alamin is bound at residue Gly64. Residue Arg96 participates in L-glutamate binding. Asn119 contacts adenosylcob(III)alamin. Residues 145–146 (RH), Glu167, and Tyr173 each bind L-glutamate. Pro176 contacts adenosylcob(III)alamin. An L-glutamate-binding site is contributed by Tyr177. Residues Phe289, Lys318, and Glu322 each coordinate adenosylcob(III)alamin.

The protein belongs to the methylaspartate mutase GlmE subunit family. As to quaternary structure, heterotetramer composed of 2 epsilon subunits (GlmE) and 2 sigma subunits (GlmS). GlmE exists as a homodimer and GlmS as a monomer. Requires adenosylcob(III)alamin as cofactor.

It carries out the reaction (2S,3S)-3-methyl-L-aspartate = L-glutamate. It participates in amino-acid degradation; L-glutamate degradation via mesaconate pathway; acetate and pyruvate from L-glutamate: step 1/4. Catalyzes the carbon skeleton rearrangement of L-glutamate to L-threo-3-methylaspartate ((2S,3S)-3-methylaspartate). The chain is Glutamate mutase epsilon subunit from Halobacterium salinarum (strain ATCC 700922 / JCM 11081 / NRC-1) (Halobacterium halobium).